The following is a 297-amino-acid chain: 4-hydroxy-tetrahydrodipicolinate synthase (297 aa).

Thr-55 contacts pyruvate. Tyr-144 serves as the catalytic Proton donor/acceptor. Catalysis depends on Lys-172, which acts as the Schiff-base intermediate with substrate. Pyruvate is bound at residue Ile-213.

Belongs to the DapA family. Homotetramer; dimer of dimers.

The protein resides in the cytoplasm. It carries out the reaction L-aspartate 4-semialdehyde + pyruvate = (2S,4S)-4-hydroxy-2,3,4,5-tetrahydrodipicolinate + H2O + H(+). The protein operates within amino-acid biosynthesis; L-lysine biosynthesis via DAP pathway; (S)-tetrahydrodipicolinate from L-aspartate: step 3/4. In terms of biological role, catalyzes the condensation of (S)-aspartate-beta-semialdehyde [(S)-ASA] and pyruvate to 4-hydroxy-tetrahydrodipicolinate (HTPA). This chain is 4-hydroxy-tetrahydrodipicolinate synthase, found in Lactococcus lactis subsp. cremoris (strain SK11).